Here is a 71-residue protein sequence, read N- to C-terminus: Translation initiation factor IF-1 (71 aa).

The S1-like domain occupies 1–71 (MSKDDLIQFT…LTKGRVIHRH (71 aa)).

It belongs to the IF-1 family. As to quaternary structure, component of the 30S ribosomal translation pre-initiation complex which assembles on the 30S ribosome in the order IF-2 and IF-3, IF-1 and N-formylmethionyl-tRNA(fMet); mRNA recruitment can occur at any time during PIC assembly.

It localises to the cytoplasm. Its function is as follows. One of the essential components for the initiation of protein synthesis. Stabilizes the binding of IF-2 and IF-3 on the 30S subunit to which N-formylmethionyl-tRNA(fMet) subsequently binds. Helps modulate mRNA selection, yielding the 30S pre-initiation complex (PIC). Upon addition of the 50S ribosomal subunit IF-1, IF-2 and IF-3 are released leaving the mature 70S translation initiation complex. In Rickettsia prowazekii (strain Madrid E), this protein is Translation initiation factor IF-1.